Consider the following 120-residue polypeptide: Ribonuclease P protein component (120 aa).

This sequence belongs to the RnpA family. Consists of a catalytic RNA component (M1 or rnpB) and a protein subunit.

It carries out the reaction Endonucleolytic cleavage of RNA, removing 5'-extranucleotides from tRNA precursor.. In terms of biological role, RNaseP catalyzes the removal of the 5'-leader sequence from pre-tRNA to produce the mature 5'-terminus. It can also cleave other RNA substrates such as 4.5S RNA. The protein component plays an auxiliary but essential role in vivo by binding to the 5'-leader sequence and broadening the substrate specificity of the ribozyme. This chain is Ribonuclease P protein component, found in Chlamydia trachomatis serovar A (strain ATCC VR-571B / DSM 19440 / HAR-13).